Here is a 132-residue protein sequence, read N- to C-terminus: Pre-histone-like nucleoprotein (132 aa).

A propeptide spanning residues 2-23 is cleaved from the precursor; it reads AILISPSNNTGWGLGTHKLFGG. Residues 124 to 132 carry the Nuclear localization signal motif; the sequence is RRKRRVRSK.

This sequence belongs to the adenoviridae histone-like nucleoprotein family. As to quaternary structure, interacts with the core-capsid bridging protein; this interaction bridges the virus core to the capsid. Interacts with host NPM1; this interaction might play a role in placing the pre-histone-like nucleoprotein on the viral DNA or regulating viral gene expression. Interacts with host HMGB1; this interaction inhibits host immune response. Cleaved near the N-terminus by the viral protease during virion maturation to form the mature protein.

It is found in the virion. It localises to the host nucleus. Its subcellular location is the host nucleolus. Functionally, plays a role in the inhibition of host immune response within the nucleus. Interacts with cellular nucleosomes and immobilizes the host immune danger signal HMGB1 on chromatin. In turn, prevents HMGB1 release out of the cell and thus decreases inflammation. Also plays a role in the wrapping and condensation of the viral DNA. May also promote viral genome import into the nucleus. The sequence is that of Pre-histone-like nucleoprotein from Canine adenovirus serotype 1 (strain RI261) (CAdV-1).